The sequence spans 100 residues: MRKRQVVLRRASPEEPSRSSSTASSLTVRTVRYGECQKNHAAAVGGYAVDGCREFMASRGEEGTVAALTCAACGCHRSFHRREIETEVVCDCNSPPSTGN.

A disordered region spans residues 1 to 26 (MRKRQVVLRRASPEEPSRSSSTASSL). Residues 33 to 83 (YGECQKNHAAAVGGYAVDGCREFMASRGEEGTVAALTCAACGCHRSFHRRE) form a ZF-HD dimerization-type; degenerate zinc finger.

Homo- and heterodimers. Interacts with ZHD1, ZHD3, ZHD5, ZHD8, ZHD10 and ZHD13. In terms of tissue distribution, mostly expressed in stems, flowers and siliques, and, to a lower extent, in inflorescence.

Its subcellular location is the cytoplasm. In terms of biological role, inhibits zinc finger homeodomain (ZHD) transcription factors by interacting with them to prevent both their nuclear localization and their DNA-binding properties. Involved in integrating signals from multiple hormones by regulating the expression of specific genes. In Arabidopsis thaliana (Mouse-ear cress), this protein is Mini zinc finger protein 2 (MIF2).